A 506-amino-acid polypeptide reads, in one-letter code: Maturase K (506 aa).

It belongs to the intron maturase 2 family. MatK subfamily.

It is found in the plastid. Its subcellular location is the chloroplast. Functionally, usually encoded in the trnK tRNA gene intron. Probably assists in splicing its own and other chloroplast group II introns. The chain is Maturase K from Mentzelia lindleyi (Blazing star).